Consider the following 217-residue polypeptide: Guanylate kinase (217 aa).

The 181-residue stretch at 10–190 (GLLIILSSPS…TEEALKTIIT (181 aa)) folds into the Guanylate kinase-like domain. 17–24 (SPSGAGKS) is a binding site for ATP.

The protein belongs to the guanylate kinase family.

It localises to the cytoplasm. It catalyses the reaction GMP + ATP = GDP + ADP. Its function is as follows. Essential for recycling GMP and indirectly, cGMP. The sequence is that of Guanylate kinase from Ruegeria sp. (strain TM1040) (Silicibacter sp.).